Reading from the N-terminus, the 309-residue chain is Taste receptor type 2 member 66 (309 aa).

Residue Met1 is a topological domain, extracellular. Residues 2-22 (ITFLPIIFSILIVVTFVIGNF) form a helical membrane-spanning segment. Topologically, residues 23–46 (ANGFIALANSIEWFKRQKISFADQ) are cytoplasmic. Residues 47 to 67 (ILTALAVPRVGLLWVLLLNWY) form a helical membrane-spanning segment. Topologically, residues 68–86 (ATELNPAFYSIEVRITAYN) are extracellular. The helical transmembrane segment at 87 to 107 (LWAVINHFSNWLATSLSIFYL) threads the bilayer. Residues 108–126 (LKIANFSNLIFLRLKRRVK) are Cytoplasmic-facing. The helical transmembrane segment at 127–147 (SVVLVILLGPLLFLVCHLFVI) threads the bilayer. The Extracellular segment spans residues 148–178 (NMNQIIWTKEYEGNMTWKIKLRSAMYLSNTT). Asn161 and Asn176 each carry an N-linked (GlcNAc...) asparagine glycan. A helical transmembrane segment spans residues 179 to 199 (VTILANLVPFTVTLISFLLLV). Topologically, residues 200-229 (CSLCKHLKKMQLHGKGSQDPSTKVHIKALQ) are cytoplasmic. Residues 230–250 (TVISFLLLCAIYFVSVIISVW) form a helical membrane-spanning segment. The Extracellular portion of the chain corresponds to 251-259 (SFKNLENKP). A helical membrane pass occupies residues 260–280 (VFMFCQAIGFSCSSAHPFILI). Over 281–309 (WGNKKLKQPFLSVLWQMRYWVKGEKPSSS) the chain is Cytoplasmic.

Belongs to the G-protein coupled receptor T2R family.

The protein resides in the membrane. Its function is as follows. Receptor that may play a role in the perception of bitterness and is gustducin-linked. May play a role in sensing the chemical composition of the gastrointestinal content. The activity of this receptor may stimulate alpha gustducin, mediate PLC-beta-2 activation and lead to the gating of TRPM5. The chain is Taste receptor type 2 member 66 (TAS2R66) from Pan paniscus (Pygmy chimpanzee).